The following is a 221-amino-acid chain: Uracil-DNA glycosylase (221 aa).

The active-site Proton acceptor is the Asp-64.

It belongs to the uracil-DNA glycosylase (UDG) superfamily. UNG family.

It localises to the cytoplasm. It carries out the reaction Hydrolyzes single-stranded DNA or mismatched double-stranded DNA and polynucleotides, releasing free uracil.. Its function is as follows. Excises uracil residues from the DNA which can arise as a result of misincorporation of dUMP residues by DNA polymerase or due to deamination of cytosine. This chain is Uracil-DNA glycosylase, found in Mycoplasmopsis pulmonis (strain UAB CTIP) (Mycoplasma pulmonis).